We begin with the raw amino-acid sequence, 295 residues long: MQTSALLLAAQALVASAGLIERQSCPSIHVFGARETTVGPGYGSAGTVVNLILNAYPGSTAEAIVYPACGGQSSCGGISYGNSAMQGTNAVASAVNSFNQRCPNTQIVLVGYSQGGQIMDNALCGGGDPGSGITNTAVPLTASAVTAVKAAILMGSPRYRAGFPYNVGTCTAQGFAARPAGFVCPSGSKIQNYCDSPDPYCCTGNNQAVHQGYGGVYGQAALTFVRSKLNSGGSPPTTPPTTPPTTPPTTPPTTPPPSGSCAALYGQCGGQGWNGATCCSQGTCRASNQWYSQCL.

An N-terminal signal peptide occupies residues methionine 1–alanine 17. Residues cysteine 25 and cysteine 102 are joined by a disulfide bond. Residues serine 113, aspartate 198, and histidine 210 contribute to the active site. Cysteine 184 and cysteine 202 are disulfide-bonded. The segment at lysine 228–serine 258 is disordered. Residues proline 236 to serine 258 show a composition bias toward pro residues. In terms of domain architecture, CBM1 spans serine 260 to leucine 295.

Belongs to the cutinase family. Post-translationally, the 2 disulfide bonds play a critical role in holding the catalytic residues in juxta-position; reduction of the disulfide bridges results in the complete inactivation of the enzyme.

Its subcellular location is the secreted. It carries out the reaction cutin + H2O = cutin monomers.. In terms of biological role, catalyzes the hydrolysis of complex carboxylic polyesters found in the cell wall of plants. May degrade cutin, a macromolecule that forms the structure of the plant cuticle. May also degrade suberin, a specialized macromolecule found in the cell wall of various plant tissues. Allows pathogenic fungi to penetrate through the cuticular barrier into the host plant during the initial stage of fungal infection. Involved in pathogenesis. The sequence is that of Cutinase 11 from Verticillium dahliae (Verticillium wilt).